Consider the following 153-residue polypeptide: UPF0260 protein YcgN (153 aa).

The protein belongs to the UPF0260 family.

The polypeptide is UPF0260 protein YcgN (Salmonella dublin (strain CT_02021853)).